Reading from the N-terminus, the 164-residue chain is Cyclic pyranopterin monophosphate synthase (164 aa).

Substrate-binding positions include 77–79 (LCH) and 115–116 (ME). Asp-130 is an active-site residue.

It belongs to the MoaC family. Homohexamer; trimer of dimers.

It catalyses the reaction (8S)-3',8-cyclo-7,8-dihydroguanosine 5'-triphosphate = cyclic pyranopterin phosphate + diphosphate. It participates in cofactor biosynthesis; molybdopterin biosynthesis. Functionally, catalyzes the conversion of (8S)-3',8-cyclo-7,8-dihydroguanosine 5'-triphosphate to cyclic pyranopterin monophosphate (cPMP). This chain is Cyclic pyranopterin monophosphate synthase, found in Sinorhizobium medicae (strain WSM419) (Ensifer medicae).